The primary structure comprises 190 residues: Pancreatic IgW, short secretory form (190 aa).

Positions 53–145 constitute an Ig-like C1-type domain; it reads PNITALVPSV…PPSNFRSMIS (93 aa). An N-linked (GlcNAc...) asparagine glycan is attached at N54. C74 and C131 are joined by a disulfide. An N-linked (GlcNAc...) asparagine glycan is attached at N179.

In terms of tissue distribution, expressed in pancreas, spleen, epigonal organ and at low levels in several other tissues.

It localises to the secreted. In Ginglymostoma cirratum (Nurse shark), this protein is Pancreatic IgW, short secretory form.